Consider the following 194-residue polypeptide: Adenylate kinase isoenzyme 1 (194 aa).

Met1 is modified (N-acetylmethionine). An ATP-binding site is contributed by 18-23 (GSGKGT). At Ser38 the chain carries Phosphoserine. Positions 38-67 (STGDLLRAEVSSGSARGKMLSEIMEKGQLV) are NMP. AMP is bound by residues Thr39, Arg44, 65-67 (QLV), 94-97 (GYPR), and Gln101. The LID stretch occupies residues 131–141 (KRGETSGRVDD). Arg132 contributes to the ATP binding site. AMP-binding residues include Arg138 and Arg149. Gly177 contributes to the ATP binding site.

This sequence belongs to the adenylate kinase family. AK1 subfamily. In terms of assembly, monomer. The cofactor is Mg(2+).

The protein localises to the cytoplasm. It catalyses the reaction a ribonucleoside 5'-phosphate + ATP = a ribonucleoside 5'-diphosphate + ADP. The enzyme catalyses AMP + ATP = 2 ADP. It carries out the reaction dAMP + ATP = dADP + ADP. The catalysed reaction is dATP + AMP = dADP + ADP. It catalyses the reaction dAMP + dATP = 2 dADP. The enzyme catalyses a 2'-deoxyribonucleoside 5'-diphosphate + ATP = a 2'-deoxyribonucleoside 5'-triphosphate + ADP. It carries out the reaction a ribonucleoside 5'-diphosphate + ATP = a ribonucleoside 5'-triphosphate + ADP. The catalysed reaction is CDP + GTP = CTP + GDP. It catalyses the reaction GDP + ATP = GTP + ADP. The enzyme catalyses UDP + ATP = UTP + ADP. It carries out the reaction GTP + UDP = UTP + GDP. The catalysed reaction is dTDP + GTP = dTTP + GDP. It catalyses the reaction dCDP + GTP = dCTP + GDP. The enzyme catalyses dGDP + ATP = dGTP + ADP. It carries out the reaction dADP + GTP = dATP + GDP. The catalysed reaction is thiamine diphosphate + ADP = thiamine triphosphate + AMP. In terms of biological role, catalyzes the reversible transfer of the terminal phosphate group between ATP and AMP. Also displays broad nucleoside diphosphate kinase activity. Plays an important role in cellular energy homeostasis and in adenine nucleotide metabolism. Also catalyzes at a very low rate the synthesis of thiamine triphosphate (ThTP) from thiamine diphosphate (ThDP) and ADP. The sequence is that of Adenylate kinase isoenzyme 1 from Bos taurus (Bovine).